The chain runs to 233 residues: Leucyl/phenylalanyl-tRNA--protein transferase (233 aa).

This sequence belongs to the L/F-transferase family.

The protein localises to the cytoplasm. It catalyses the reaction N-terminal L-lysyl-[protein] + L-leucyl-tRNA(Leu) = N-terminal L-leucyl-L-lysyl-[protein] + tRNA(Leu) + H(+). It carries out the reaction N-terminal L-arginyl-[protein] + L-leucyl-tRNA(Leu) = N-terminal L-leucyl-L-arginyl-[protein] + tRNA(Leu) + H(+). The enzyme catalyses L-phenylalanyl-tRNA(Phe) + an N-terminal L-alpha-aminoacyl-[protein] = an N-terminal L-phenylalanyl-L-alpha-aminoacyl-[protein] + tRNA(Phe). In terms of biological role, functions in the N-end rule pathway of protein degradation where it conjugates Leu, Phe and, less efficiently, Met from aminoacyl-tRNAs to the N-termini of proteins containing an N-terminal arginine or lysine. This Laribacter hongkongensis (strain HLHK9) protein is Leucyl/phenylalanyl-tRNA--protein transferase.